The following is a 337-amino-acid chain: Tetraacyldisaccharide 4'-kinase (337 aa).

56–63 (VAGGAGKT) provides a ligand contact to ATP.

It belongs to the LpxK family.

It carries out the reaction a lipid A disaccharide + ATP = a lipid IVA + ADP + H(+). Its pathway is glycolipid biosynthesis; lipid IV(A) biosynthesis; lipid IV(A) from (3R)-3-hydroxytetradecanoyl-[acyl-carrier-protein] and UDP-N-acetyl-alpha-D-glucosamine: step 6/6. Its function is as follows. Transfers the gamma-phosphate of ATP to the 4'-position of a tetraacyldisaccharide 1-phosphate intermediate (termed DS-1-P) to form tetraacyldisaccharide 1,4'-bis-phosphate (lipid IVA). The polypeptide is Tetraacyldisaccharide 4'-kinase (Rhodospirillum centenum (strain ATCC 51521 / SW)).